The chain runs to 202 residues: Glycerol-3-phosphate acyltransferase (202 aa).

The next 6 membrane-spanning stretches (helical) occupy residues 2 to 22 (INLL…AVVV), 51 to 71 (KAAI…VLLA), 80 to 100 (VDET…LFPL), 116 to 136 (ILFA…LIIA), 137 to 157 (FFFR…PFFY), and 158 to 178 (VLMN…VLLI).

Belongs to the PlsY family. As to quaternary structure, probably interacts with PlsX.

The protein localises to the cell inner membrane. It carries out the reaction an acyl phosphate + sn-glycerol 3-phosphate = a 1-acyl-sn-glycero-3-phosphate + phosphate. It functions in the pathway lipid metabolism; phospholipid metabolism. Functionally, catalyzes the transfer of an acyl group from acyl-phosphate (acyl-PO(4)) to glycerol-3-phosphate (G3P) to form lysophosphatidic acid (LPA). This enzyme utilizes acyl-phosphate as fatty acyl donor, but not acyl-CoA or acyl-ACP. The polypeptide is Glycerol-3-phosphate acyltransferase (Cupriavidus metallidurans (strain ATCC 43123 / DSM 2839 / NBRC 102507 / CH34) (Ralstonia metallidurans)).